Here is a 308-residue protein sequence, read N- to C-terminus: D-alanine--D-alanine ligase B (308 aa).

An ATP-grasp domain is found at 102–302 (KKVAAAAGVV…FAELLSWMVE (201 aa)). 128–183 (PMKPPYVVKPVREGSSFGVVIVKEDQPHPPQVIGSADWKYGDEVMVEGYIAGRELT) is a binding site for ATP. Mg(2+) is bound by residues Asp252, Glu269, and Asn271.

It belongs to the D-alanine--D-alanine ligase family. The cofactor is Mg(2+). Mn(2+) serves as cofactor.

The protein resides in the cytoplasm. The enzyme catalyses 2 D-alanine + ATP = D-alanyl-D-alanine + ADP + phosphate + H(+). It functions in the pathway cell wall biogenesis; peptidoglycan biosynthesis. Functionally, cell wall formation. The sequence is that of D-alanine--D-alanine ligase B from Brucella suis biovar 1 (strain 1330).